Here is a 213-residue protein sequence, read N- to C-terminus: UPF0056 membrane protein AF_2111 (213 aa).

Helical transmembrane passes span 1-21 (MDIAGYLSFFFASFTTLFIII), 51-71 (IIAFLILFITMVTGGKILDYF), 75-95 (ISSLKIAGGILLFISSVDILL), 118-138 (VFPLALPLYTGPGAITAGIVL), 142-162 (AGDVVMKLLVVLSAALVYSIV), and 181-201 (ADIAARILAIFLAAIAVEFVF).

It belongs to the UPF0056 (MarC) family.

Its subcellular location is the cell membrane. The sequence is that of UPF0056 membrane protein AF_2111 from Archaeoglobus fulgidus (strain ATCC 49558 / DSM 4304 / JCM 9628 / NBRC 100126 / VC-16).